Reading from the N-terminus, the 201-residue chain is Peptidyl-tRNA hydrolase (201 aa).

Tyrosine 14 lines the tRNA pocket. The Proton acceptor role is filled by histidine 19. TRNA is bound by residues tyrosine 64, asparagine 66, and asparagine 112.

It belongs to the PTH family. Monomer.

It is found in the cytoplasm. The catalysed reaction is an N-acyl-L-alpha-aminoacyl-tRNA + H2O = an N-acyl-L-amino acid + a tRNA + H(+). Its function is as follows. Hydrolyzes ribosome-free peptidyl-tRNAs (with 1 or more amino acids incorporated), which drop off the ribosome during protein synthesis, or as a result of ribosome stalling. Catalyzes the release of premature peptidyl moieties from peptidyl-tRNA molecules trapped in stalled 50S ribosomal subunits, and thus maintains levels of free tRNAs and 50S ribosomes. The sequence is that of Peptidyl-tRNA hydrolase from Bradyrhizobium diazoefficiens (strain JCM 10833 / BCRC 13528 / IAM 13628 / NBRC 14792 / USDA 110).